The sequence spans 234 residues: uncharacterized protein (234 aa).

Residue 10-34 (VVTGASSGIGASIAETLANQGVKVV) participates in NADP(+) binding. S143 is a substrate binding site. Catalysis depends on Y156, which acts as the Proton acceptor.

Belongs to the short-chain dehydrogenases/reductases (SDR) family.

This is an uncharacterized protein from Staphylococcus saprophyticus subsp. saprophyticus (strain ATCC 15305 / DSM 20229 / NCIMB 8711 / NCTC 7292 / S-41).